The chain runs to 877 residues: MGPLGRETWAQRLGTFRASPSAFMAGPEGEDLGRDLLSDLRSEKLSEPMKVALLALSLEYPDQLWPDAPAAEAAATSLLDTLVLLPPRPSALRRPLLLAATTALAAGGALNPASGASGRLLPLLLGLASGRDLGRSFCPASEQRPLQATAWECLRELESCRPGLLGGCLGLLRALLGREGPAQPLSLLLALALRNALVIQARAGAGLQGLLTAGESSMEGGPWNWMLAEEGEVHLQPQAPSWPAAEEDECGLAALELSPEEARELRATVAQLLDASYLLTPVAQAQLLWLLGWALRGLRGQPPVLFKPQLVRLLGTAQLTLLHAMLALKAAFGEALFTAQDEALLLRRLTLAAQHPALPLPTHLFYLHCLLNFPENWPLGPTGEEAAPLLLGSQLCRGLLPSLLHEPMALLARLHLLCLLCVEDEEKEGKGQDRSPRHYLEELLAGLRQRAALDGGPRALATLCFQASYLVAHCLAGQPVVLIPLTQGLAQLYRARPALAPHFVDLLDHVGPELQEPLRVALRQEVASRPGREEALRWHLQMLASVADGDAQSATLSFLRAAAAHCTDWGLQQALLRVCRALLRAGVGGGLADLLQELARQLEDPDGQDHARLYYILLAHLAGPKLGVALGPSLAAPALASSLVAENQGFAAALMVQEAPAPIRLSVGPRRAEGAVPVLRLQVEVLEPVYSLELRFRVEGQLYAPLGAVHVPCLCPGRPTRPLLLPLQPRRPAPARLAVRALYSTPSGLTCHAHLPPLLVAFADLFLPFPQPPEGAQLDFFEELWDSCLPKGTESRLWCPLGPEGLEALVSRHLEPFVVVAQPPVSYLVAIRLPPDSRLLLRLEAAQADGVPVALRTDDWAVLPLAGDYLRGLSAAG.

Probably part of the adaptor protein complex 5 (AP-5), a tetramer composed of AP5B1, AP5M1, AP5S1 and AP5Z1. Interacts with ZFYVE26 and SPG11.

As part of AP-5, a probable fifth adaptor protein complex, it may be involved in endosomal transport. This is AP-5 complex subunit beta-1 (AP5B1) from Bos taurus (Bovine).